Consider the following 160-residue polypeptide: Secreted RxLR effector protein RXLR-C11 (160 aa).

The signal sequence occupies residues 1–19 (MHFSLVLLVFAAIVIPICA). A RxLR-dEER motif is present at residues 58-75 (RLLRMNDKAVISDHEEER).

This sequence belongs to the RxLR effector family.

It is found in the secreted. Its subcellular location is the host cell membrane. It localises to the host nucleus. Functionally, secreted effector that suppresses pattern-triggered immunity (PTI) in plant host. The polypeptide is Secreted RxLR effector protein RXLR-C11 (Plasmopara halstedii (Downy mildew of sunflower)).